Here is a 161-residue protein sequence, read N- to C-terminus: Cyclic pyranopterin monophosphate synthase (161 aa).

Substrate is bound by residues 75 to 77 (LCH) and 113 to 114 (ME). Asp128 is a catalytic residue.

It belongs to the MoaC family. As to quaternary structure, homohexamer; trimer of dimers.

It catalyses the reaction (8S)-3',8-cyclo-7,8-dihydroguanosine 5'-triphosphate = cyclic pyranopterin phosphate + diphosphate. Its pathway is cofactor biosynthesis; molybdopterin biosynthesis. Functionally, catalyzes the conversion of (8S)-3',8-cyclo-7,8-dihydroguanosine 5'-triphosphate to cyclic pyranopterin monophosphate (cPMP). The chain is Cyclic pyranopterin monophosphate synthase from Enterobacter sp. (strain 638).